We begin with the raw amino-acid sequence, 104 residues long: Large ribosomal subunit protein bL21 (104 aa).

This sequence belongs to the bacterial ribosomal protein bL21 family. As to quaternary structure, part of the 50S ribosomal subunit. Contacts protein L20.

In terms of biological role, this protein binds to 23S rRNA in the presence of protein L20. This is Large ribosomal subunit protein bL21 from Helicobacter pylori (strain HPAG1).